A 637-amino-acid chain; its full sequence is Threonine--tRNA ligase (637 aa).

In terms of domain architecture, TGS spans 1-61 (MLNITLPDGS…TEDSSVQIIT (61 aa)). A catalytic region spans residues 242–533 (DHRKLGKQLD…LIENHAGSFP (292 aa)). Cys333, His384, and His510 together coordinate Zn(2+).

This sequence belongs to the class-II aminoacyl-tRNA synthetase family. Homodimer. Requires Zn(2+) as cofactor.

Its subcellular location is the cytoplasm. It catalyses the reaction tRNA(Thr) + L-threonine + ATP = L-threonyl-tRNA(Thr) + AMP + diphosphate + H(+). Catalyzes the attachment of threonine to tRNA(Thr) in a two-step reaction: L-threonine is first activated by ATP to form Thr-AMP and then transferred to the acceptor end of tRNA(Thr). Also edits incorrectly charged L-seryl-tRNA(Thr). The sequence is that of Threonine--tRNA ligase from Neisseria meningitidis serogroup C (strain 053442).